Consider the following 236-residue polypeptide: MICOS complex subunit MIC25 (236 aa).

Positions 1-11 are enriched in basic and acidic residues; the sequence is MGSAESREGRR. Residues 1–22 are disordered; the sequence is MGSAESREGRRASFGMDEEERV. G2 carries N-myristoyl glycine lipidation. Residues S13 and S31 each carry the phosphoserine modification. Disordered regions lie at residues 34–86 and 109–132; these read VVNR…VQVD and EREA…DQEK. The span at 48 to 58 shows a compositional bias: low complexity; the sequence is GLLAPPAAALG. 2 stretches are compositionally biased toward basic and acidic residues: residues 62–71 and 122–132; these read GREKDSKPPR and RRGEGGVDQEK. Positions 127 to 167 form a coiled coil; that stretch reads GVDQEKQRLAQRARELESQEEELRCRDAFYKEQLGRLERQN. The 42-residue stretch at 195-236 folds into the CHCH domain; that stretch reads EPVCSGLQAQILRCYRDRLQEVLLCADLVRAYQHCVSSAHKG. Short sequence motifs (cx9C motif) lie at residues 198 to 208 and 219 to 229; these read CSGLQAQILRC and CADLVRAYQHC. 2 cysteine pairs are disulfide-bonded: C198–C229 and C208–C219.

This sequence belongs to the MICOS complex subunit Mic19 family. Metazoan Mic25 subfamily. Component of the mitochondrial contact site and cristae organizing system (MICOS) complex, composed of at least MICOS10/MIC10, CHCHD3/MIC19, CHCHD6/MIC25, APOOL/MIC27, IMMT/MIC60, APOO/MIC23/MIC26 and MICOS13/MIC13. This complex was also known under the names MINOS or MitOS complex. The MICOS complex associates with mitochondrial outer membrane proteins SAMM50, MTX1 and MTX2 (together described as components of the mitochondrial outer membrane sorting assembly machinery (SAM) complex) and DNAJC11, mitochondrial inner membrane protein TMEM11 and with HSPA9. The MICOS and SAM complexes together with DNAJC11 are part of a large protein complex spanning both membranes termed the mitochondrial intermembrane space bridging (MIB) complex. Interacts with DISC1. Interacts with IMMT/MIC60.

The protein localises to the mitochondrion inner membrane. The protein resides in the mitochondrion. Functionally, component of the MICOS complex, a large protein complex of the mitochondrial inner membrane that plays crucial roles in the maintenance of crista junctions, inner membrane architecture, and formation of contact sites to the outer membrane. The polypeptide is MICOS complex subunit MIC25 (CHCHD6) (Bos taurus (Bovine)).